The following is a 330-amino-acid chain: Ketol-acid reductoisomerase (NADP(+)) (330 aa).

Residues 2 to 182 form the KARI N-terminal Rossmann domain; sequence ARMYYDADAN…GGTRAGILET (181 aa). Residues 25–28, serine 51, serine 53, and 83–86 contribute to the NADP(+) site; these read YGSQ and DEFQ. Histidine 108 is an active-site residue. Glycine 134 is a binding site for NADP(+). Residues 183–328 form the KARI C-terminal knotted domain; it reads SFREETETDL…KDLRAMFSWL (146 aa). Mg(2+) contacts are provided by aspartate 191, glutamate 195, glutamate 227, and glutamate 231. Serine 252 contacts substrate.

The protein belongs to the ketol-acid reductoisomerase family. The cofactor is Mg(2+).

It carries out the reaction (2R)-2,3-dihydroxy-3-methylbutanoate + NADP(+) = (2S)-2-acetolactate + NADPH + H(+). The enzyme catalyses (2R,3R)-2,3-dihydroxy-3-methylpentanoate + NADP(+) = (S)-2-ethyl-2-hydroxy-3-oxobutanoate + NADPH + H(+). Its pathway is amino-acid biosynthesis; L-isoleucine biosynthesis; L-isoleucine from 2-oxobutanoate: step 2/4. The protein operates within amino-acid biosynthesis; L-valine biosynthesis; L-valine from pyruvate: step 2/4. Involved in the biosynthesis of branched-chain amino acids (BCAA). Catalyzes an alkyl-migration followed by a ketol-acid reduction of (S)-2-acetolactate (S2AL) to yield (R)-2,3-dihydroxy-isovalerate. In the isomerase reaction, S2AL is rearranged via a Mg-dependent methyl migration to produce 3-hydroxy-3-methyl-2-ketobutyrate (HMKB). In the reductase reaction, this 2-ketoacid undergoes a metal-dependent reduction by NADPH to yield (R)-2,3-dihydroxy-isovalerate. The polypeptide is Ketol-acid reductoisomerase (NADP(+)) (Synechococcus sp. (strain ATCC 27144 / PCC 6301 / SAUG 1402/1) (Anacystis nidulans)).